The sequence spans 224 residues: Pyridoxine/pyridoxamine 5'-phosphate oxidase (224 aa).

Substrate-binding positions include 19 to 22 and lysine 81; that span reads RGEY. FMN is bound by residues 76 to 81, 91 to 92, lysine 98, and glutamine 120; these read RSVLCK and FT. Substrate-binding residues include tyrosine 138 and arginine 142. FMN is bound by residues 155–156 and tryptophan 201; that span reads QS. 207 to 209 serves as a coordination point for substrate; the sequence is RMH. Arginine 211 provides a ligand contact to FMN.

This sequence belongs to the pyridoxamine 5'-phosphate oxidase family. In terms of assembly, homodimer. FMN is required as a cofactor.

The enzyme catalyses pyridoxamine 5'-phosphate + O2 + H2O = pyridoxal 5'-phosphate + H2O2 + NH4(+). It catalyses the reaction pyridoxine 5'-phosphate + O2 = pyridoxal 5'-phosphate + H2O2. The protein operates within cofactor metabolism; pyridoxal 5'-phosphate salvage; pyridoxal 5'-phosphate from pyridoxamine 5'-phosphate: step 1/1. Its pathway is cofactor metabolism; pyridoxal 5'-phosphate salvage; pyridoxal 5'-phosphate from pyridoxine 5'-phosphate: step 1/1. Its function is as follows. Catalyzes the oxidation of either pyridoxine 5'-phosphate (PNP) or pyridoxamine 5'-phosphate (PMP) into pyridoxal 5'-phosphate (PLP). The chain is Pyridoxine/pyridoxamine 5'-phosphate oxidase from Mycobacterium bovis (strain ATCC BAA-935 / AF2122/97).